Here is a 76-residue protein sequence, read N- to C-terminus: MAETDPKTVQDLTSVVQTLLQQMQDKFQTMSDQIIGRIDDMSSRIDDLEKNIADLMTQAGVEELEGENKIPATQKS.

It belongs to the HSBP1 family. Homohexamer. Associates with heptad repeats of HSF1 trimers and probably also HSF1 monomers, and with HSP70. Association with HSF1 trimers and HSP70 coincides with attenuation of heat shock response and the conversion of HSF1 trimer to monomer.

Its subcellular location is the nucleus. In terms of biological role, negative regulator of the heat shock response. Negatively affects HSF1 DNA-binding activity. May have a role in the suppression of the activation of the stress response during the aging process. This chain is Heat shock factor-binding protein 1 (HSBP1), found in Pongo abelii (Sumatran orangutan).